Here is a 743-residue protein sequence, read N- to C-terminus: Photosystem I P700 chlorophyll a apoprotein A2 (743 aa).

The next 8 membrane-spanning stretches (helical) occupy residues 46–69 (IFATHFGHVAIIFLWASSLLFHVA), 135–158 (LYMGAVFLLILASVFLFAGWLHLQ), 175–199 (LNHHLAGLFGVSSLAWAGHLIHVAI), 273–291 (MAHHHLAIAVIFIIAGHMY), 336–359 (LHFQLGIHLAALGTITSLVAQHMY), 375–401 (AALYTHHQYIAIFLMLGAFAHGAIFWV), 423–445 (AIISHLSWVSLFLGFHTLGLYVH), and 526–544 (FLVHHAFALALHTTVLILV). [4Fe-4S] cluster-binding residues include cysteine 568 and cysteine 577. The next 2 helical transmembrane spans lie at 584–605 (AFYLATFWALNTVGWVTFYWHW) and 652–674 (LSVWAWMFLFGHLVWATGFMFLI). Chlorophyll a-binding residues include histidine 663, methionine 671, and tyrosine 679. Residue tryptophan 680 participates in phylloquinone binding. Residues 716-736 (LVGLTHFTVGYVLTYAAFLIA) traverse the membrane as a helical segment.

It belongs to the PsaA/PsaB family. As to quaternary structure, the PsaA/B heterodimer binds the P700 chlorophyll special pair and subsequent electron acceptors. PSI consists of a core antenna complex that captures photons, and an electron transfer chain that converts photonic excitation into a charge separation. The cyanobacterial PSI reaction center is composed of one copy each of PsaA,B,C,D,E,F,I,J,K,L,M and X, and forms trimeric complexes. The cofactor is PSI electron transfer chain: 5 chlorophyll a, 1 chlorophyll a', 2 phylloquinones and 3 4Fe-4S clusters. PSI core antenna: 90 chlorophyll a, 22 carotenoids, 3 phospholipids and 1 galactolipid. P700 is a chlorophyll a/chlorophyll a' dimer, A0 is one or more chlorophyll a, A1 is one or both phylloquinones and FX is a shared 4Fe-4S iron-sulfur center..

It localises to the cellular thylakoid membrane. The catalysed reaction is reduced [plastocyanin] + hnu + oxidized [2Fe-2S]-[ferredoxin] = oxidized [plastocyanin] + reduced [2Fe-2S]-[ferredoxin]. PsaA and PsaB bind P700, the primary electron donor of photosystem I (PSI), as well as the electron acceptors A0, A1 and FX. PSI is a plastocyanin/cytochrome c6-ferredoxin oxidoreductase, converting photonic excitation into a charge separation, which transfers an electron from the donor P700 chlorophyll pair to the spectroscopically characterized acceptors A0, A1, FX, FA and FB in turn. Oxidized P700 is reduced on the lumenal side of the thylakoid membrane by plastocyanin or cytochrome c6. The chain is Photosystem I P700 chlorophyll a apoprotein A2 from Mastigocladus laminosus (Fischerella sp.).